The following is a 73-amino-acid chain: MKLSLRLISALLMSVMLLFATGMGPVEARTCESPSNKFQGVCLNSQSCAKACPSEGFSGGRCSSLRCYCSKAC.

Residues 1–28 (MKLSLRLISALLMSVMLLFATGMGPVEA) form the signal peptide. Disulfide bonds link Cys-31–Cys-73, Cys-42–Cys-62, Cys-48–Cys-67, and Cys-52–Cys-69.

It belongs to the DEFL family.

It is found in the secreted. Functionally, confers broad-spectrum resistance to pathogens. This is Defensin-like protein 10 (PDF2.6) from Arabidopsis thaliana (Mouse-ear cress).